The following is a 431-amino-acid chain: Ribosomal RNA small subunit methyltransferase B (431 aa).

S-adenosyl-L-methionine contacts are provided by residues 254–260, D277, D303, and D322; that span reads CAAPGGK. The Nucleophile role is filled by C375.

This sequence belongs to the class I-like SAM-binding methyltransferase superfamily. RsmB/NOP family.

The protein resides in the cytoplasm. The catalysed reaction is cytidine(967) in 16S rRNA + S-adenosyl-L-methionine = 5-methylcytidine(967) in 16S rRNA + S-adenosyl-L-homocysteine + H(+). Specifically methylates the cytosine at position 967 (m5C967) of 16S rRNA. The protein is Ribosomal RNA small subunit methyltransferase B of Klebsiella pneumoniae subsp. pneumoniae (strain ATCC 700721 / MGH 78578).